The primary structure comprises 347 residues: Chlorophyllase type 0 (347 aa).

Residues 1–19 (MAKLLLLIFGVFIFVNSQA) form the signal peptide. A propeptide spanning residues 20 to 30 (QTFPTILEKHN) is cleaved from the precursor. Positions 160–164 (GHSRG) match the GXSXG motif. Catalysis depends on serine 162, which acts as the Nucleophile. Aspartate 191 acts as the Charge relay system in catalysis. Asparagine 215, asparagine 229, and asparagine 251 each carry an N-linked (GlcNAc...) asparagine glycan. The Charge relay system role is filled by histidine 262. Asparagine 321 carries an N-linked (GlcNAc...) asparagine glycan.

Belongs to the AB hydrolase superfamily. Lipase family.

It carries out the reaction a chlorophyll + H2O = a chlorophyllide + phytol + H(+). The catalysed reaction is chlorophyll a + H2O = phytol + chlorophyllide a + H(+). The protein operates within porphyrin-containing compound metabolism; chlorophyll degradation. Inhibited by diisopropyl fluorophosphate (DFP), phenylmethanesulfonyl fluoride (PMSF) or p-chloromercuribenzoic acid (PCMB), but not by N-ethylmaleimide (NEM) or iodoacetamide. In terms of biological role, catalyzes the hydrolysis of ester bond in chlorophyll to yield chlorophyllide and phytol. The chain is Chlorophyllase type 0 from Chenopodium album (Fat hen).